A 513-amino-acid chain; its full sequence is Protein disulfide-isomerase 2 (513 aa).

The first 20 residues, Met1–Ser20, serve as a signal peptide directing secretion. 2 consecutive Thioredoxin domains span residues Cys21–Lys147 and Asp355–Ala486. Active-site nucleophile residues include Cys70, Cys73, Cys406, and Cys409. 2 cysteine pairs are disulfide-bonded: Cys70/Cys73 and Cys406/Cys409. Positions Leu491–Leu513 are disordered. The segment covering Val500 to Leu513 has biased composition (basic and acidic residues). A Prevents secretion from ER motif is present at residues His510–Leu513.

The protein belongs to the protein disulfide isomerase family.

Its subcellular location is the endoplasmic reticulum lumen. It carries out the reaction Catalyzes the rearrangement of -S-S- bonds in proteins.. Participates in the folding of proteins containing disulfide bonds, may be involved in glycosylation, prolyl hydroxylation and triglyceride transfer. This Dictyostelium discoideum (Social amoeba) protein is Protein disulfide-isomerase 2 (pdi2).